The following is a 663-amino-acid chain: MFGVRYDPEESLLTPTLYHNGRFLPNLKKRKRRVQDHDVVDDDVVVFDNDKDEEEMNKEKKEEEEEEEEEEEETDNSEGESEKSESGSESESESESESESDVDGKHMKEELEDKDDAMEVDTIIEDNEYSGKHKSIFDKFKLSVTRTVNDDVVHSSRDEEEDFQKQSGSREKEKEEVVETQDLAPLPQPQLPRDRKLNSSTQHSANLDWLTTPEYIAIADTKPFSEFPLSPFMHENLESLGFENAFAVQVGVLSKLLPEIQANKLRPDAFGDVLVNASTGSGKTLAYSIPIIESLKDRVVPRVRAIVLVPTKPLINQVRATMLQLALGTNLNIVSLKNDISIREESERLIELVPDVVISTPGRLVEHLAMDSISLSSLRYLVVDEADRLLNQSFQNWSQILISKIHLQQVYDVANVWSLKVQKFIFSATLTTDAGKLASLDFHNPRLLIVNDSQRLVNELFSVPAMLSEYKLNFGVAKSSLKPLILAKFLIAQEKLSDVLVFTKSNESSIRLCTLLQAIFDRICLQEKVKVGFMNLTNNRTSLRSKILKDFTSQKINILVATDLIARGLDVTSIKDVVNYDLLNSSREYVHRVGRTARANQAGNAYNLVFGKGEEKWFKTISSEVSRNNDVKDVEVNLKQLISDEDEKLYQEALQSLQDQVRK.

2 disordered regions span residues 1-119 and 153-200; these read MFGV…DAME and VHSS…LNSS. Composition is skewed to acidic residues over residues 39–79 and 88–101; these read VVDD…NSEG and SESE…SESD. Basic and acidic residues-rich tracts occupy residues 102-111 and 168-177; these read VDGKHMKEEL and GSREKEKEEV. Positions 222–250 match the Q motif motif; the sequence is KPFSEFPLSPFMHENLESLGFENAFAVQV. The 185-residue stretch at 264-448 folds into the Helicase ATP-binding domain; it reads KLRPDAFGDV…SLDFHNPRLL (185 aa). 277 to 284 provides a ligand contact to ATP; the sequence is ASTGSGKT. The short motif at 384–387 is the DEAD box element; sequence DEAD. Positions 485-642 constitute a Helicase C-terminal domain; sequence ILAKFLIAQE…DVEVNLKQLI (158 aa).

The protein belongs to the DEAD box helicase family. DDX51/DBP6 subfamily. In terms of assembly, associated with pre-ribosomal particles.

Its subcellular location is the nucleus. The protein resides in the nucleolus. It carries out the reaction ATP + H2O = ADP + phosphate + H(+). In terms of biological role, ATP-binding RNA helicase involved in the biogenesis of 60S ribosomal subunits and is required for the normal formation of 25S and 5.8S rRNAs. The protein is ATP-dependent RNA helicase DBP6 (DBP6) of Lodderomyces elongisporus (strain ATCC 11503 / CBS 2605 / JCM 1781 / NBRC 1676 / NRRL YB-4239) (Yeast).